Consider the following 72-residue polypeptide: Probable protein transport protein Sec61 subunit gamma (72 aa).

Residues 1 to 40 (MSQKLQKPSFLSEYLRSIRLFSKKCVRPSGKELSMSIKRH) lie on the Cytoplasmic side of the membrane. Residues 41–61 (AIGIGFLGILGYAIKLIHIPI) form a helical membrane-spanning segment. Topologically, residues 62–72 (NNIIVSSPGKE) are extracellular.

The protein belongs to the SecE/SEC61-gamma family. Heterotrimeric complex composed of SEC61-alpha, SEC61-beta and SEC61-gamma.

The protein localises to the endoplasmic reticulum membrane. In terms of biological role, necessary for protein translocation in the endoplasmic reticulum. The sequence is that of Probable protein transport protein Sec61 subunit gamma from Encephalitozoon cuniculi (strain GB-M1) (Microsporidian parasite).